Here is a 377-residue protein sequence, read N- to C-terminus: NIF3-like protein 1 (377 aa).

Lys109 carries the post-translational modification N6-acetyllysine. Residues 244 to 377 (LLLYTGMGRL…ETDRDPLHVI (134 aa)) form a mediates interaction with COPS2 region. Thr255 carries the phosphothreonine modification. Position 259 is a phosphoserine (Ser259).

It belongs to the GTP cyclohydrolase I type 2/NIF3 family. In terms of assembly, homodimer. Interacts with COPS2. Interacts with THOC7.

The protein resides in the cytoplasm. It is found in the nucleus. Functionally, may function as a transcriptional corepressor through its interaction with COPS2, negatively regulating the expression of genes involved in neuronal differentiation. This Bos taurus (Bovine) protein is NIF3-like protein 1.